The primary structure comprises 126 residues: Large ribosomal subunit protein bL12 (126 aa).

This sequence belongs to the bacterial ribosomal protein bL12 family. Homodimer. Part of the ribosomal stalk of the 50S ribosomal subunit. Forms a multimeric L10(L12)X complex, where L10 forms an elongated spine to which 2 to 4 L12 dimers bind in a sequential fashion. Binds GTP-bound translation factors.

Functionally, forms part of the ribosomal stalk which helps the ribosome interact with GTP-bound translation factors. Is thus essential for accurate translation. The protein is Large ribosomal subunit protein bL12 of Chlorobaculum tepidum (strain ATCC 49652 / DSM 12025 / NBRC 103806 / TLS) (Chlorobium tepidum).